A 193-amino-acid chain; its full sequence is Holliday junction branch migration complex subunit RuvA (193 aa).

Positions 1–64 are domain I; it reads MITSLTGTIL…EDAHLLYGFM (64 aa). Residues 65 to 139 are domain II; that stretch reads TVAERDMFRL…DKMGGIAPGP (75 aa). Residues 139–143 form a flexible linker region; that stretch reads PMGRG. The tract at residues 144–193 is domain III; that stretch reads GAGDPRQEAIAALLTLGYKPAQASQAIAGLADGLGLEDLIRQSLQNLSRH.

The protein belongs to the RuvA family. As to quaternary structure, homotetramer. Forms an RuvA(8)-RuvB(12)-Holliday junction (HJ) complex. HJ DNA is sandwiched between 2 RuvA tetramers; dsDNA enters through RuvA and exits via RuvB. An RuvB hexamer assembles on each DNA strand where it exits the tetramer. Each RuvB hexamer is contacted by two RuvA subunits (via domain III) on 2 adjacent RuvB subunits; this complex drives branch migration. In the full resolvosome a probable DNA-RuvA(4)-RuvB(12)-RuvC(2) complex forms which resolves the HJ.

The protein resides in the cytoplasm. In terms of biological role, the RuvA-RuvB-RuvC complex processes Holliday junction (HJ) DNA during genetic recombination and DNA repair, while the RuvA-RuvB complex plays an important role in the rescue of blocked DNA replication forks via replication fork reversal (RFR). RuvA specifically binds to HJ cruciform DNA, conferring on it an open structure. The RuvB hexamer acts as an ATP-dependent pump, pulling dsDNA into and through the RuvAB complex. HJ branch migration allows RuvC to scan DNA until it finds its consensus sequence, where it cleaves and resolves the cruciform DNA. The chain is Holliday junction branch migration complex subunit RuvA from Acidithiobacillus ferrooxidans (strain ATCC 53993 / BNL-5-31) (Leptospirillum ferrooxidans (ATCC 53993)).